We begin with the raw amino-acid sequence, 377 residues long: Chaperone protein DnaJ (377 aa).

The region spanning 5-70 (DYYEILGVSR…QKRAAYDQYG (66 aa)) is the J domain. The CR-type zinc finger occupies 132–210 (GVTKEIRIPT…CHGHGRIEKS (79 aa)). Zn(2+)-binding residues include Cys145, Cys148, Cys162, Cys165, Cys184, Cys187, Cys198, and Cys201. CXXCXGXG motif repeat units follow at residues 145 to 152 (CDVCHGSG), 162 to 169 (CPTCHGAG), 184 to 191 (CPHCHGRG), and 198 to 205 (CNKCHGHG).

Belongs to the DnaJ family. Homodimer. Zn(2+) is required as a cofactor.

The protein localises to the cytoplasm. Its function is as follows. Participates actively in the response to hyperosmotic and heat shock by preventing the aggregation of stress-denatured proteins and by disaggregating proteins, also in an autonomous, DnaK-independent fashion. Unfolded proteins bind initially to DnaJ; upon interaction with the DnaJ-bound protein, DnaK hydrolyzes its bound ATP, resulting in the formation of a stable complex. GrpE releases ADP from DnaK; ATP binding to DnaK triggers the release of the substrate protein, thus completing the reaction cycle. Several rounds of ATP-dependent interactions between DnaJ, DnaK and GrpE are required for fully efficient folding. Also involved, together with DnaK and GrpE, in the DNA replication of plasmids through activation of initiation proteins. The protein is Chaperone protein DnaJ of Edwardsiella ictaluri (strain 93-146).